Reading from the N-terminus, the 509-residue chain is L-arabinose isomerase (509 aa).

Mn(2+) is bound by residues Glu313, Glu340, His357, and His456.

This sequence belongs to the arabinose isomerase family. The cofactor is Mn(2+).

The enzyme catalyses beta-L-arabinopyranose = L-ribulose. Its pathway is carbohydrate degradation; L-arabinose degradation via L-ribulose; D-xylulose 5-phosphate from L-arabinose (bacterial route): step 1/3. Catalyzes the conversion of L-arabinose to L-ribulose. The sequence is that of L-arabinose isomerase from Bacteroides thetaiotaomicron (strain ATCC 29148 / DSM 2079 / JCM 5827 / CCUG 10774 / NCTC 10582 / VPI-5482 / E50).